Here is a 184-residue protein sequence, read N- to C-terminus: Ribosome-recycling factor (184 aa).

The protein belongs to the RRF family.

It is found in the cytoplasm. In terms of biological role, responsible for the release of ribosomes from messenger RNA at the termination of protein biosynthesis. May increase the efficiency of translation by recycling ribosomes from one round of translation to another. This is Ribosome-recycling factor from Clostridium botulinum (strain Loch Maree / Type A3).